The sequence spans 290 residues: Syntaxin (290 aa).

A disordered region spans residues 1-22 (MTKDRLAALKAAQSDDDDNDDV). Over 1–267 (MTKDRLAALK…KYQSKARRKK (267 aa)) the chain is Cytoplasmic. Residues 32–114 (MEEFFEQVDE…EEHTNKSSAD (83 aa)) are a coiled coil. A t-SNARE coiled-coil homology domain is found at 194-256 (LADIEARHND…ETAKMDTKKA (63 aa)). Residues 268–288 (IMILVCLAILIIILVGVIGGT) traverse the membrane as a helical; Anchor for type IV membrane protein segment. The Extracellular portion of the chain corresponds to 289–290 (LG).

It belongs to the syntaxin family.

The protein resides in the membrane. Its function is as follows. Potentially involved in docking of synaptic vesicles at presynaptic active zones. This is Syntaxin from Aplysia californica (California sea hare).